A 316-amino-acid chain; its full sequence is Serpentine receptor class delta-45 (316 aa).

The next 7 helical transmembrane spans lie at 8–28, 42–62, 91–111, 128–148, 184–204, 234–254, and 266–286; these read VFYPMFFILVIPSLILLIFII, ILLVTCISQIVAVTTNCLIQI, YFLTQTAVVISNVLIFLTIYL, VTFFILSPIFIALGAQTSLIL, IIITFVITGTILILPAVGLLL, LQVFLPLICYIPVFGSFLVLA, and FFSVLVMLPMLFDPYIILYSV.

This sequence belongs to the nematode receptor-like protein srd family.

The protein resides in the membrane. The protein is Serpentine receptor class delta-45 (srd-45) of Caenorhabditis elegans.